We begin with the raw amino-acid sequence, 298 residues long: Beta-soluble NSF attachment protein (298 aa).

The protein belongs to the SNAP family. Interacts with PRKCABP, and disrupts the interaction between GRIA2 and PRKCABP, leading to the internalization of GRIA2.

The protein localises to the membrane. In terms of biological role, required for vesicular transport between the endoplasmic reticulum and the Golgi apparatus. The protein is Beta-soluble NSF attachment protein (NAPB) of Homo sapiens (Human).